Reading from the N-terminus, the 411-residue chain is Kelch domain-containing protein 10 (411 aa).

Kelch repeat units follow at residues 72–133, 135–186, 187–239, 240–288, 296–342, and 345–388; these read NLYV…LHGH, LLVF…IIHG, FLYV…HDGQ, RIYV…RRCH, EVFI…AVTP, and CMYI…YFPH.

The protein belongs to the KLHDC10 family. As to quaternary structure, component of a CRL2 E3 ubiquitin-protein ligase complex, also named ECS (Elongin BC-CUL2/5-SOCS-box protein) complex, composed of CUL2, Elongin BC (ELOB and ELOC), RBX1 and substrate-specific adapter KLHDC10.

The protein operates within protein modification; protein ubiquitination. Substrate-recognition component of a Cul2-RING (CRL2) E3 ubiquitin-protein ligase complex of the DesCEND (destruction via C-end degrons) pathway, which recognizes a C-degron located at the extreme C terminus of target proteins, leading to their ubiquitination and degradation. The C-degron recognized by the DesCEND pathway is usually a motif of less than ten residues and can be present in full-length proteins, truncated proteins or proteolytically cleaved forms. The CRL2(KLHDC10) complex specifically recognizes proteins with a proline-glycine (Pro-Gly) or an alanine tail (CAT tail) at the C-terminus, leading to their ubiquitination and degradation. The CRL2(KLHDC10) complex is involved in the ribosome-associated quality control (RQC) pathway, which mediates the extraction of incompletely synthesized nascent chains from stalled ribosomes: CRL2(KLHDC10) acts downstream of NEMF and recognizes CAT tails associated with stalled nascent chains, leading to their ubiquitination and degradation. This is Kelch domain-containing protein 10 from Xenopus tropicalis (Western clawed frog).